We begin with the raw amino-acid sequence, 400 residues long: Putative cytochrome P450 133B2 (400 aa).

Cys348 provides a ligand contact to heme.

This sequence belongs to the cytochrome P450 family. Heme is required as a cofactor.

The protein is Putative cytochrome P450 133B2 (cyp133B2) of Xylella fastidiosa (strain 9a5c).